Here is a 318-residue protein sequence, read N- to C-terminus: Ubiquitin-like domain-containing CTD phosphatase 1 (318 aa).

The 79-residue stretch at 3–81 (LSLIIKWGGQ…IMMMGTREES (79 aa)) folds into the Ubiquitin-like domain. An FCP1 homology domain is found at 133–294 (PREGKKLLVL…LKLTQYLKEI (162 aa)). Residues D143, D145, and D253 each coordinate Mg(2+).

The cofactor is Mg(2+).

The protein resides in the nucleus. It carries out the reaction O-phospho-L-seryl-[protein] + H2O = L-seryl-[protein] + phosphate. The catalysed reaction is O-phospho-L-threonyl-[protein] + H2O = L-threonyl-[protein] + phosphate. Functionally, dephosphorylates 26S nuclear proteasomes, thereby decreasing their proteolytic activity. Recruited to the 19S regulatory particle of the 26S proteasome where it dephosphorylates 19S component PSMC2 which impairs PSMC2 ATPase activity and disrupts 26S proteasome assembly. Has also been reported to stimulate the proteolytic activity of the 26S proteasome. This chain is Ubiquitin-like domain-containing CTD phosphatase 1 (UBLCP1), found in Gallus gallus (Chicken).